The following is a 179-amino-acid chain: uncharacterized protein (179 aa).

Disordered regions lie at residues 26–103 (LSAV…SYED) and 136–179 (KHKA…SWFN). A compositionally biased stretch (basic and acidic residues) spans 34-61 (QQGKNEEQRQHDEWVAERNREIQQEKQR). A compositionally biased stretch (low complexity) spans 63–79 (ANAQAAANKRAATAAAN). Composition is skewed to basic and acidic residues over residues 82–103 (ARQDKLDAEASADKKRDQSYED) and 158–179 (GGRDLMKSVGKAEENKSDSWFN).

This is an uncharacterized protein from Escherichia coli (strain K12).